A 193-amino-acid chain; its full sequence is Peptidyl-tRNA hydrolase (193 aa).

His-17 serves as a coordination point for tRNA. His-22 (proton acceptor) is an active-site residue. TRNA is bound by residues Phe-68, Asn-70, and Asn-116.

This sequence belongs to the PTH family. As to quaternary structure, monomer.

The protein resides in the cytoplasm. The enzyme catalyses an N-acyl-L-alpha-aminoacyl-tRNA + H2O = an N-acyl-L-amino acid + a tRNA + H(+). Functionally, hydrolyzes ribosome-free peptidyl-tRNAs (with 1 or more amino acids incorporated), which drop off the ribosome during protein synthesis, or as a result of ribosome stalling. Its function is as follows. Catalyzes the release of premature peptidyl moieties from peptidyl-tRNA molecules trapped in stalled 50S ribosomal subunits, and thus maintains levels of free tRNAs and 50S ribosomes. This is Peptidyl-tRNA hydrolase from Xanthomonas campestris pv. campestris (strain 8004).